Reading from the N-terminus, the 284-residue chain is GPN-loop GTPase 3 (284 aa).

GTP is bound at residue 13 to 18 (GSGKST). The Gly-Pro-Asn (GPN)-loop; involved in dimer interface motif lies at 72–74 (GPN). Position 174–177 (174–177 (TKMD)) interacts with GTP. The segment at 261–284 (KEPKEHEEESSSMFDEYFQERQNE) is disordered.

The protein belongs to the GPN-loop GTPase family. As to quaternary structure, heterodimer with GPN1. Binds to RNA polymerase II (RNAPII). Interacts directly with subunits RPB4 and RPB7 and the CTD of RPB1.

In terms of biological role, small GTPase required for proper localization of RNA polymerase II (RNAPII). May act at an RNAP assembly step prior to nuclear import. The sequence is that of GPN-loop GTPase 3 from Rattus norvegicus (Rat).